Reading from the N-terminus, the 779-residue chain is uncharacterized protein (779 aa).

Ser-97 and Ser-120 each carry phosphoserine. Basic and acidic residues predominate over residues 125-135; sequence EIDGEDEKKSV. The interval 125 to 174 is disordered; the sequence is EIDGEDEKKSVGQESITGSAKRKDRRSKTNGSKRQKAEANREPPSDISLS. The span at 144–158 shows a compositional bias: basic residues; sequence AKRKDRRSKTNGSKR. Basic and acidic residues predominate over residues 159–168; sequence QKAEANREPP. Residues 215–222 and 533–540 contribute to the ATP site; these read GPPGCGKT. Residues 759 to 779 form a disordered region; that stretch reads DRQKYQRLAKRWSSASTNDAD.

The protein belongs to the AAA ATPase family.

The protein localises to the nucleus. This is an uncharacterized protein from Schizosaccharomyces pombe (strain 972 / ATCC 24843) (Fission yeast).